The following is a 282-amino-acid chain: Pantothenate synthetase (282 aa).

Position 30-37 (30-37) interacts with ATP; sequence MGNLHEGH. The active-site Proton donor is the H37. Q61 is a (R)-pantoate binding site. Q61 is a binding site for beta-alanine. 149–152 serves as a coordination point for ATP; it reads GEKD. Q155 contacts (R)-pantoate. Residues V178 and 186-189 contribute to the ATP site; that span reads KSSR.

The protein belongs to the pantothenate synthetase family. Homodimer.

Its subcellular location is the cytoplasm. The catalysed reaction is (R)-pantoate + beta-alanine + ATP = (R)-pantothenate + AMP + diphosphate + H(+). The protein operates within cofactor biosynthesis; (R)-pantothenate biosynthesis; (R)-pantothenate from (R)-pantoate and beta-alanine: step 1/1. Its function is as follows. Catalyzes the condensation of pantoate with beta-alanine in an ATP-dependent reaction via a pantoyl-adenylate intermediate. This chain is Pantothenate synthetase, found in Marinobacter nauticus (strain ATCC 700491 / DSM 11845 / VT8) (Marinobacter aquaeolei).